Consider the following 440-residue polypeptide: Beta-1,3-galactosyl-O-glycosyl-glycoprotein beta-1,6-N-acetylglucosaminyltransferase 3 (440 aa).

Topologically, residues 1–12 (MKMTGWKKKLCR) are cytoplasmic. A helical; Signal-anchor for type II membrane protein membrane pass occupies residues 13–30 (GHHLWALGCYMLLAVVAL). The Lumenal segment spans residues 31-440 (RLSLRLKCDV…RHKAIYGTEL (410 aa)). Disulfide bonds link Cys-73/Cys-230, Cys-164/Cys-384, Cys-185/Cys-212, and Cys-393/Cys-425. N-linked (GlcNAc...) asparagine glycosylation is present at Asn-108.

It belongs to the glycosyltransferase 14 family. N-glycosylated.

The protein localises to the golgi apparatus membrane. The enzyme catalyses a 3-O-[beta-D-galactosyl-(1-&gt;3)-N-acetyl-alpha-D-galactosaminyl]-L-seryl-[protein] + UDP-N-acetyl-alpha-D-glucosamine = 3-O-{beta-D-galactosyl-(1-&gt;3)-[N-acetyl-beta-D-glucosaminyl-(1-&gt;6)]-N-acetyl-alpha-D-galactosaminyl}-L-seryl-[protein] + UDP + H(+). It carries out the reaction a 3-O-[beta-D-galactosyl-(1-&gt;3)-N-acetyl-alpha-D-galactosaminyl]-L-threonyl-[protein] + UDP-N-acetyl-alpha-D-glucosamine = a 3-O-{beta-D-galactosyl-(1-&gt;3)-[N-acetyl-beta-D-glucosaminyl-(1-&gt;6)]-N-acetyl-alpha-D-galactosaminyl}-L-threonyl-[protein] + UDP + H(+). It catalyses the reaction a beta-D-Gal-(1-&gt;4)-beta-D-GlcNAc-(1-&gt;3)-beta-D-Gal-(1-&gt;4)-beta-D-GlcNAc derivative + UDP-N-acetyl-alpha-D-glucosamine = a beta-D-Gal-(1-&gt;4)-beta-D-GlcNAc-(1-&gt;3)-[beta-D-GlcNAc-(1-&gt;6)]-beta-D-Gal-(1-&gt;4)-N-acetyl-beta-D-glucosaminyl derivative + UDP + H(+). The catalysed reaction is 3-O-[N-acetyl-beta-D-glucosaminyl-(1-&gt;3)-N-acetyl-alpha-D-galactosaminyl]-L-seryl-[protein] + UDP-N-acetyl-alpha-D-glucosamine = 3-O-[N-acetyl-beta-D-glucosaminyl-(1-&gt;3)-[N-acetyl-beta-D-glucosaminyl-(1-&gt;6)]-N-acetyl-alpha-D-galactosaminyl]-L-seryl-[protein] + UDP + H(+). The enzyme catalyses a 3-O-[N-acetyl-beta-D-glucosaminyl-(1-&gt;3)-N-acetyl-alpha-D-galactosaminyl]-L-threonyl-[protein] + UDP-N-acetyl-alpha-D-glucosamine = 3-O-[N-acetyl-beta-D-glucosaminyl-(1-&gt;3)-[N-acetyl-beta-D-glucosaminyl-(1-&gt;6)]-N-acetyl-alpha-D-galactosaminyl]-L-threonyl-[protein] + UDP + H(+). Its pathway is protein modification; protein glycosylation. Glycosyltransferase that can synthesize all known mucin beta 6 N-acetylglucosaminides. Mediates core 2 and core 4 O-glycan branching, 2 important steps in mucin-type biosynthesis. Also has I-branching enzyme activity by converting linear into branched poly-N-acetyllactosaminoglycans, leading to introduce the blood group I antigen during embryonic development. The protein is Beta-1,3-galactosyl-O-glycosyl-glycoprotein beta-1,6-N-acetylglucosaminyltransferase 3 (GCNT3) of Ovis aries (Sheep).